Reading from the N-terminus, the 408-residue chain is Histidine--tRNA ligase (408 aa).

This sequence belongs to the class-II aminoacyl-tRNA synthetase family. Homodimer.

It localises to the cytoplasm. It catalyses the reaction tRNA(His) + L-histidine + ATP = L-histidyl-tRNA(His) + AMP + diphosphate + H(+). The polypeptide is Histidine--tRNA ligase (Wolbachia pipientis wMel).